The sequence spans 319 residues: Structure-specific endonuclease subunit SLX1 (319 aa).

In terms of domain architecture, GIY-YIG spans 20 to 103 (TFYCCYLLQS…QHGYKTHYIP (84 aa)). The segment at 233–297 (CNLCGQCYDY…LPNFCMCPGC (65 aa)) adopts an SLX1-type zinc-finger fold.

The protein belongs to the SLX1 family. In terms of assembly, forms a heterodimer with SLX4. A divalent metal cation serves as cofactor.

The protein localises to the nucleus. Catalytic subunit of the SLX1-SLX4 structure-specific endonuclease that resolves DNA secondary structures generated during DNA repair and recombination. Has endonuclease activity towards branched DNA substrates, introducing single-strand cuts in duplex DNA close to junctions with ss-DNA. The polypeptide is Structure-specific endonuclease subunit SLX1 (Vanderwaltozyma polyspora (strain ATCC 22028 / DSM 70294 / BCRC 21397 / CBS 2163 / NBRC 10782 / NRRL Y-8283 / UCD 57-17) (Kluyveromyces polysporus)).